Here is a 171-residue protein sequence, read N- to C-terminus: NADH-quinone oxidoreductase subunit B 2 (171 aa).

Positions 37, 38, 102, and 132 each coordinate [4Fe-4S] cluster.

It belongs to the complex I 20 kDa subunit family. As to quaternary structure, NDH-1 is composed of 14 different subunits. Subunits NuoB, C, D, E, F, and G constitute the peripheral sector of the complex. Requires [4Fe-4S] cluster as cofactor.

The protein localises to the cell inner membrane. It carries out the reaction a quinone + NADH + 5 H(+)(in) = a quinol + NAD(+) + 4 H(+)(out). NDH-1 shuttles electrons from NADH, via FMN and iron-sulfur (Fe-S) centers, to quinones in the respiratory chain. Couples the redox reaction to proton translocation (for every two electrons transferred, four hydrogen ions are translocated across the cytoplasmic membrane), and thus conserves the redox energy in a proton gradient. The polypeptide is NADH-quinone oxidoreductase subunit B 2 (Chromobacterium violaceum (strain ATCC 12472 / DSM 30191 / JCM 1249 / CCUG 213 / NBRC 12614 / NCIMB 9131 / NCTC 9757 / MK)).